The primary structure comprises 156 residues: Ribosomal RNA large subunit methyltransferase H (156 aa).

S-adenosyl-L-methionine-binding positions include L73, G104, and L123–L128.

Belongs to the RNA methyltransferase RlmH family. In terms of assembly, homodimer.

It localises to the cytoplasm. The catalysed reaction is pseudouridine(1915) in 23S rRNA + S-adenosyl-L-methionine = N(3)-methylpseudouridine(1915) in 23S rRNA + S-adenosyl-L-homocysteine + H(+). In terms of biological role, specifically methylates the pseudouridine at position 1915 (m3Psi1915) in 23S rRNA. This chain is Ribosomal RNA large subunit methyltransferase H, found in Shewanella baltica (strain OS223).